The sequence spans 444 residues: 3-phosphoshikimate 1-carboxyvinyltransferase (444 aa).

3-phosphoshikimate is bound by residues Lys-29, Ser-30, and Arg-34. Lys-29 lines the phosphoenolpyruvate pocket. Phosphoenolpyruvate contacts are provided by Gly-102 and Arg-131. 3-phosphoshikimate is bound by residues Ser-176, Gln-178, Asp-326, and Lys-353. Gln-178 is a binding site for phosphoenolpyruvate. The Proton acceptor role is filled by Asp-326. Residues Arg-357 and Arg-399 each contribute to the phosphoenolpyruvate site.

This sequence belongs to the EPSP synthase family. Monomer.

It is found in the cytoplasm. The catalysed reaction is 3-phosphoshikimate + phosphoenolpyruvate = 5-O-(1-carboxyvinyl)-3-phosphoshikimate + phosphate. It functions in the pathway metabolic intermediate biosynthesis; chorismate biosynthesis; chorismate from D-erythrose 4-phosphate and phosphoenolpyruvate: step 6/7. Functionally, catalyzes the transfer of the enolpyruvyl moiety of phosphoenolpyruvate (PEP) to the 5-hydroxyl of shikimate-3-phosphate (S3P) to produce enolpyruvyl shikimate-3-phosphate and inorganic phosphate. The chain is 3-phosphoshikimate 1-carboxyvinyltransferase from Synechococcus sp. (strain JA-3-3Ab) (Cyanobacteria bacterium Yellowstone A-Prime).